A 31-amino-acid polypeptide reads, in one-letter code: Protamine-1B (31 aa).

The tract at residues 1 to 31 (MPRRRRASRRIRRRRRPRVSRRRRRGGRRRR) is disordered.

In terms of tissue distribution, testis.

The protein resides in the nucleus. It localises to the chromosome. Its function is as follows. Protamines substitute for histones in the chromatin of sperm during the haploid phase of spermatogenesis. They compact sperm DNA into a highly condensed, stable and inactive complex. The sequence is that of Protamine-1B from Oncorhynchus mykiss (Rainbow trout).